The primary structure comprises 157 residues: SsrA-binding protein (157 aa).

Belongs to the SmpB family.

It is found in the cytoplasm. Its function is as follows. Required for rescue of stalled ribosomes mediated by trans-translation. Binds to transfer-messenger RNA (tmRNA), required for stable association of tmRNA with ribosomes. tmRNA and SmpB together mimic tRNA shape, replacing the anticodon stem-loop with SmpB. tmRNA is encoded by the ssrA gene; the 2 termini fold to resemble tRNA(Ala) and it encodes a 'tag peptide', a short internal open reading frame. During trans-translation Ala-aminoacylated tmRNA acts like a tRNA, entering the A-site of stalled ribosomes, displacing the stalled mRNA. The ribosome then switches to translate the ORF on the tmRNA; the nascent peptide is terminated with the 'tag peptide' encoded by the tmRNA and targeted for degradation. The ribosome is freed to recommence translation, which seems to be the essential function of trans-translation. This is SsrA-binding protein from Chlorobium luteolum (strain DSM 273 / BCRC 81028 / 2530) (Pelodictyon luteolum).